The sequence spans 559 residues: Cellulose biosynthesis protein BcsG (559 aa).

4 helical membrane passes run 34-54 (LLWAGYLNFHPLLNLVFAAFL), 68-88 (HWIALPIGFALFWHDTWLPGP), 113-133 (FINWQMIGAIFVLLVAWLFLS), and 138-158 (ITVFVVAILLWLNVLTLAGPS).

The protein localises to the cell inner membrane. This chain is Cellulose biosynthesis protein BcsG (bcsG), found in Escherichia coli (strain K12).